The primary structure comprises 396 residues: L-lactate dehydrogenase (396 aa).

In terms of domain architecture, FMN hydroxy acid dehydrogenase spans methionine 1–aspartate 380. Residue tyrosine 24 coordinates substrate. The FMN site is built by serine 106 and glutamine 127. Tyrosine 129 contributes to the substrate binding site. Threonine 155 lines the FMN pocket. Arginine 164 is a binding site for substrate. Lysine 251 lines the FMN pocket. The active-site Proton acceptor is the histidine 275. Position 278 (arginine 278) interacts with substrate. Aspartate 306 to arginine 330 contributes to the FMN binding site.

It belongs to the FMN-dependent alpha-hydroxy acid dehydrogenase family. FMN serves as cofactor.

The protein resides in the cell inner membrane. The enzyme catalyses (S)-lactate + A = pyruvate + AH2. Catalyzes the conversion of L-lactate to pyruvate. Is coupled to the respiratory chain. The protein is L-lactate dehydrogenase of Escherichia fergusonii (strain ATCC 35469 / DSM 13698 / CCUG 18766 / IAM 14443 / JCM 21226 / LMG 7866 / NBRC 102419 / NCTC 12128 / CDC 0568-73).